We begin with the raw amino-acid sequence, 152 residues long: Arginine repressor (152 aa).

Belongs to the ArgR family.

The protein resides in the cytoplasm. It functions in the pathway amino-acid biosynthesis; L-arginine biosynthesis [regulation]. Its function is as follows. Regulates arginine biosynthesis genes. In Caldicellulosiruptor bescii (strain ATCC BAA-1888 / DSM 6725 / KCTC 15123 / Z-1320) (Anaerocellum thermophilum), this protein is Arginine repressor.